Consider the following 63-residue polypeptide: Large ribosomal subunit protein uL29 (63 aa).

The protein belongs to the universal ribosomal protein uL29 family.

In Erwinia tasmaniensis (strain DSM 17950 / CFBP 7177 / CIP 109463 / NCPPB 4357 / Et1/99), this protein is Large ribosomal subunit protein uL29.